The chain runs to 157 residues: Small ribosomal subunit protein uS7 (157 aa).

The protein belongs to the universal ribosomal protein uS7 family. As to quaternary structure, part of the 30S ribosomal subunit. Contacts proteins S9 and S11.

One of the primary rRNA binding proteins, it binds directly to 16S rRNA where it nucleates assembly of the head domain of the 30S subunit. Is located at the subunit interface close to the decoding center, probably blocks exit of the E-site tRNA. The protein is Small ribosomal subunit protein uS7 of Chlamydia trachomatis serovar A (strain ATCC VR-571B / DSM 19440 / HAR-13).